A 445-amino-acid chain; its full sequence is Phosphoglucosamine mutase (445 aa).

The active-site Phosphoserine intermediate is the Ser102. Mg(2+) is bound by residues Ser102, Asp241, Asp243, and Asp245. Phosphoserine is present on Ser102.

The protein belongs to the phosphohexose mutase family. Mg(2+) serves as cofactor. Activated by phosphorylation.

The catalysed reaction is alpha-D-glucosamine 1-phosphate = D-glucosamine 6-phosphate. Catalyzes the conversion of glucosamine-6-phosphate to glucosamine-1-phosphate. The protein is Phosphoglucosamine mutase of Shewanella piezotolerans (strain WP3 / JCM 13877).